The primary structure comprises 231 residues: Probable intron-encoded endonuclease 1 (231 aa).

Belongs to the LAGLIDADG endonuclease family.

It localises to the mitochondrion. Its function is as follows. Endonuclease involved in mitochondrial 21S rRNA gene intron homing. This Wickerhamomyces canadensis (Yeast) protein is Probable intron-encoded endonuclease 1.